We begin with the raw amino-acid sequence, 175 residues long: PE-PGRS family protein PE_PGRS8 (175 aa).

Positions 1 to 93 constitute a PE domain; that stretch reads MSFVIAAPEA…AGSYAAAEAA (93 aa).

Belongs to the mycobacterial PE family. PGRS subfamily.

It localises to the secreted. It is found in the cell wall. Its subcellular location is the cell surface. This is PE-PGRS family protein PE_PGRS8 from Mycobacterium tuberculosis (strain ATCC 25618 / H37Rv).